Reading from the N-terminus, the 178-residue chain is ATP synthase subunit delta (178 aa).

It belongs to the ATPase delta chain family. F-type ATPases have 2 components, F(1) - the catalytic core - and F(0) - the membrane proton channel. F(1) has five subunits: alpha(3), beta(3), gamma(1), delta(1), epsilon(1). F(0) has three main subunits: a(1), b(2) and c(10-14). The alpha and beta chains form an alternating ring which encloses part of the gamma chain. F(1) is attached to F(0) by a central stalk formed by the gamma and epsilon chains, while a peripheral stalk is formed by the delta and b chains.

It localises to the cell inner membrane. Its function is as follows. F(1)F(0) ATP synthase produces ATP from ADP in the presence of a proton or sodium gradient. F-type ATPases consist of two structural domains, F(1) containing the extramembraneous catalytic core and F(0) containing the membrane proton channel, linked together by a central stalk and a peripheral stalk. During catalysis, ATP synthesis in the catalytic domain of F(1) is coupled via a rotary mechanism of the central stalk subunits to proton translocation. This protein is part of the stalk that links CF(0) to CF(1). It either transmits conformational changes from CF(0) to CF(1) or is implicated in proton conduction. This chain is ATP synthase subunit delta, found in Stutzerimonas stutzeri (strain A1501) (Pseudomonas stutzeri).